The following is a 339-amino-acid chain: Oncoprotein MEQ (339 aa).

The tract at residues 1 to 80 is disordered; the sequence is MSQEPEPGAM…ARRRRRKQTD (80 aa). A Phosphoserine; by host CDK2 modification is found at Ser-42. The basic motif stretch occupies residues 57–84; that stretch reads KQKLERRRKRNRDAARRRRRKQTDYVDK. In terms of domain architecture, bZIP spans 57 to 120; it reads KQKLERRRKR…TSLRVQLACH (64 aa). A compositionally biased stretch (basic residues) spans 60 to 77; it reads LERRRKRNRDAARRRRRK. The Nuclear localization signal signature appears at 62 to 78; it reads RRRKRNRDAARRRRRKQ. A leucine-zipper region spans residues 85–113; the sequence is LHEACEELQRANEHLRKEIRDLRTECTSL. The interval 120–339 is transactivation domain; sequence HEPVCPMAVP…VWWFPGDGRP (220 aa). A compositionally biased stretch (pro residues) spans 145-160; the sequence is PEPPICTPPPPSPDEP. The tract at residues 145 to 172 is disordered; sequence PEPPICTPPPPSPDEPNAPHCSGSQPPI.

This sequence belongs to the bZIP family. Jun subfamily. In terms of assembly, homodimer. Interacts with host JUN; this interaction allows MEQ to engage in host cell processes by disguising itself as a cellular JUN. In terms of processing, phosphorylated by host CDK2; this phosphorylation greatly reduces the DNA binding activity of MEQ.

It localises to the host nucleus. It is found in the host nucleolus. Functionally, functions as a DNA-binding transcription factor. Promotes transformation, host cell growth, host cell-cycle progression through G1/S phase, and possesses antiapoptotic activity. Forms functional heterodimers with host JUN. These heterodimers bind with high affinity DNA sequences called MEQ-responsive elements MERE I (TGACA/GTCA), while MEQ homodimers bind a second type of sites termed MERE II (ACACA). Both homo and heterodimerization of MEQ are required for oncogenesis. The chain is Oncoprotein MEQ (MDV005) from Gallid herpesvirus 2 (strain Chicken/Md5/ATCC VR-987) (GaHV-2).